The chain runs to 1302 residues: Cingulin-like protein 1 (1302 aa).

Positions 1 to 554 (MELYFGEYQH…ELTQQTNEET (554 aa)) are head. Residues 37-51 (AGSYGVSIRVQGIDG) carry the ZIM motif. The interval 75 to 104 (PFPPPVINNLPLHSSNGSVPKENSEELQLP) is disordered. 2 positions are modified to phosphoserine: Ser-112 and Ser-202. Disordered regions lie at residues 186–209 (KKPWTCFPKPSNSQPTSPSLEDPA), 251–305 (FTSG…TPTS), and 364–392 (PGLQRRGRSGKRNRINTDDRKRSRSVDSA). Residues 195 to 204 (PSNSQPTSPS) show a composition bias toward polar residues. The segment covering 264–282 (AHPETKKTRPDVLPFRRQD) has biased composition (basic and acidic residues). Phosphoserine occurs at positions 283, 297, and 298. Positions 296 to 305 (SSSSSTTPTS) are enriched in low complexity. Positions 366 to 377 (LQRRGRSGKRNR) are enriched in basic residues. The segment covering 378 to 388 (INTDDRKRSRS) has biased composition (basic and acidic residues). Phosphoserine is present on residues Ser-388, Ser-391, and Ser-486. Residues 604-1258 (NSTSEVKDLL…QLNSMKKDLR (655 aa)) are a coiled coil. Basic and acidic residues predominate over residues 655–664 (RSQHNEKVEE). Residues 655–675 (RSQHNEKVEENSTLQQRLEES) form a disordered region. The residue at position 708 (Ser-708) is a Phosphoserine. 2 disordered regions span residues 903-929 (AAQGNLSQTTQEQKQLSEKLKEESEQK) and 1263-1287 (PSKVLDDMDDDDDLSTDGGSLYEAP). The segment covering 917 to 929 (QLSEKLKEESEQK) has biased composition (basic and acidic residues). The segment at 1263-1302 (PSKVLDDMDDDDDLSTDGGSLYEAPVSYTFSKDSTVASQI) is tail.

The protein belongs to the cingulin family. As to quaternary structure, homodimer or oligomer. Interacts with CD2AP and SH3BP1; probably part of a complex at cell junctions. As to expression, smooth muscle, spleen, testis, fetal brain, amygdala, corpus callosum, cerebellum, thalamus and subthalamic nucleus of adult brain.

The protein resides in the cell junction. It is found in the tight junction. In terms of biological role, may be involved in anchoring the apical junctional complex, especially tight junctions, to actin-based cytoskeletons. The protein is Cingulin-like protein 1 (CGNL1) of Homo sapiens (Human).